We begin with the raw amino-acid sequence, 451 residues long: Bifunctional protein GlmU (451 aa).

Positions 1–225 (MVVVAILAAG…YQEILGINDR (225 aa)) are pyrophosphorylase. UDP-N-acetyl-alpha-D-glucosamine contacts are provided by residues 7–10 (LAAG), Lys-21, Gln-72, and 77–78 (GT). Position 102 (Asp-102) interacts with Mg(2+). Gly-139, Glu-154, Asn-169, and Asn-223 together coordinate UDP-N-acetyl-alpha-D-glucosamine. Asn-223 contacts Mg(2+). The linker stretch occupies residues 226-246 (LQLATAYEILQRRVKEQWMMA). The tract at residues 247-451 (GVTLIDPNSI…LGWRRKSGES (205 aa)) is N-acetyltransferase. Residues Arg-328 and Lys-346 each coordinate UDP-N-acetyl-alpha-D-glucosamine. His-358 (proton acceptor) is an active-site residue. 2 residues coordinate UDP-N-acetyl-alpha-D-glucosamine: Tyr-361 and Asn-372. Acetyl-CoA contacts are provided by residues Ala-375, 381 to 382 (NY), Ser-400, Ala-418, and Arg-435.

In the N-terminal section; belongs to the N-acetylglucosamine-1-phosphate uridyltransferase family. It in the C-terminal section; belongs to the transferase hexapeptide repeat family. As to quaternary structure, homotrimer. Mg(2+) is required as a cofactor.

The protein localises to the cytoplasm. It carries out the reaction alpha-D-glucosamine 1-phosphate + acetyl-CoA = N-acetyl-alpha-D-glucosamine 1-phosphate + CoA + H(+). The catalysed reaction is N-acetyl-alpha-D-glucosamine 1-phosphate + UTP + H(+) = UDP-N-acetyl-alpha-D-glucosamine + diphosphate. Its pathway is nucleotide-sugar biosynthesis; UDP-N-acetyl-alpha-D-glucosamine biosynthesis; N-acetyl-alpha-D-glucosamine 1-phosphate from alpha-D-glucosamine 6-phosphate (route II): step 2/2. It participates in nucleotide-sugar biosynthesis; UDP-N-acetyl-alpha-D-glucosamine biosynthesis; UDP-N-acetyl-alpha-D-glucosamine from N-acetyl-alpha-D-glucosamine 1-phosphate: step 1/1. It functions in the pathway bacterial outer membrane biogenesis; LPS lipid A biosynthesis. Functionally, catalyzes the last two sequential reactions in the de novo biosynthetic pathway for UDP-N-acetylglucosamine (UDP-GlcNAc). The C-terminal domain catalyzes the transfer of acetyl group from acetyl coenzyme A to glucosamine-1-phosphate (GlcN-1-P) to produce N-acetylglucosamine-1-phosphate (GlcNAc-1-P), which is converted into UDP-GlcNAc by the transfer of uridine 5-monophosphate (from uridine 5-triphosphate), a reaction catalyzed by the N-terminal domain. This chain is Bifunctional protein GlmU, found in Nostoc sp. (strain PCC 7120 / SAG 25.82 / UTEX 2576).